Reading from the N-terminus, the 306-residue chain is Curved DNA-binding protein (306 aa).

The region spanning 5–69 (DYYAIMGVKP…QRRAEYDQMW (65 aa)) is the J domain.

Its subcellular location is the cytoplasm. It is found in the nucleoid. DNA-binding protein that preferentially recognizes a curved DNA sequence. It is probably a functional analog of DnaJ; displays overlapping activities with DnaJ, but functions under different conditions, probably acting as a molecular chaperone in an adaptive response to environmental stresses other than heat shock. Lacks autonomous chaperone activity; binds native substrates and targets them for recognition by DnaK. Its activity is inhibited by the binding of CbpM. The sequence is that of Curved DNA-binding protein from Shigella flexneri.